Consider the following 299-residue polypeptide: Protein U23 (299 aa).

The first 27 residues, 1–27 (MRKSEFNAKSCFLMIGICVFNLNSSSC), serve as a signal peptide directing secretion. The helical transmembrane segment at 247 to 267 (LVIWICGISFVGAFIIVIVIL) threads the bilayer.

It localises to the host membrane. This is Protein U23 (U23) from Human herpesvirus 6B (strain Z29) (HHV-6 variant B).